Here is a 185-residue protein sequence, read N- to C-terminus: Elongation factor P (185 aa).

This sequence belongs to the elongation factor P family.

The protein resides in the cytoplasm. The protein operates within protein biosynthesis; polypeptide chain elongation. In terms of biological role, involved in peptide bond synthesis. Stimulates efficient translation and peptide-bond synthesis on native or reconstituted 70S ribosomes in vitro. Probably functions indirectly by altering the affinity of the ribosome for aminoacyl-tRNA, thus increasing their reactivity as acceptors for peptidyl transferase. The polypeptide is Elongation factor P (Acaryochloris marina (strain MBIC 11017)).